The primary structure comprises 474 residues: Bifunctional protein HldE (474 aa).

The tract at residues 1–318 (MKLSMPRFDQ…RAIQREEGSE (318 aa)) is ribokinase. 194–197 (NLSE) is an ATP binding site. Asp-263 is an active-site residue. Residues 343–474 (FTNGCFDILH…AIVEKIRGQG (132 aa)) form a cytidylyltransferase region.

In the N-terminal section; belongs to the carbohydrate kinase PfkB family. It in the C-terminal section; belongs to the cytidylyltransferase family. In terms of assembly, homodimer.

The catalysed reaction is D-glycero-beta-D-manno-heptose 7-phosphate + ATP = D-glycero-beta-D-manno-heptose 1,7-bisphosphate + ADP + H(+). It carries out the reaction D-glycero-beta-D-manno-heptose 1-phosphate + ATP + H(+) = ADP-D-glycero-beta-D-manno-heptose + diphosphate. Its pathway is nucleotide-sugar biosynthesis; ADP-L-glycero-beta-D-manno-heptose biosynthesis; ADP-L-glycero-beta-D-manno-heptose from D-glycero-beta-D-manno-heptose 7-phosphate: step 1/4. The protein operates within nucleotide-sugar biosynthesis; ADP-L-glycero-beta-D-manno-heptose biosynthesis; ADP-L-glycero-beta-D-manno-heptose from D-glycero-beta-D-manno-heptose 7-phosphate: step 3/4. Catalyzes the phosphorylation of D-glycero-D-manno-heptose 7-phosphate at the C-1 position to selectively form D-glycero-beta-D-manno-heptose-1,7-bisphosphate. Its function is as follows. Catalyzes the ADP transfer from ATP to D-glycero-beta-D-manno-heptose 1-phosphate, yielding ADP-D-glycero-beta-D-manno-heptose. The protein is Bifunctional protein HldE of Pseudomonas savastanoi pv. phaseolicola (strain 1448A / Race 6) (Pseudomonas syringae pv. phaseolicola (strain 1448A / Race 6)).